A 1148-amino-acid chain; its full sequence is Envelopment polyprotein (1148 aa).

An N-terminal signal peptide occupies residues 1-23; it reads MGELSPVCLCLLLQGLLLCNTGA. Over 24 to 496 the chain is Lumenal; the sequence is ARNLNELKME…PGLHGWATML (473 aa). Cystine bridges form between C34–C159, C68–C165, C117–C136, C141–C146, C183–C193, and C218–C257. A glycan (N-linked (GlcNAc...) asparagine; by host) is linked at N142. An N-linked (GlcNAc...) asparagine; by host glycan is attached at N357. Cystine bridges form between C386–C445, C390–C399, C415–C434, and C462–C485. N409 carries N-linked (GlcNAc...) asparagine; by host glycosylation. A helical transmembrane segment spans residues 497 to 517; it reads LLLTFCFGWVLIPTITMILLK. The Cytoplasmic segment spans residues 518–637; it reads ILIAFAYLCS…LSLFRYRSRF (120 aa). Residues 526 to 543 form a binding to the ribonucleoprotein region; the sequence is CSKYNTDSKFRILIEKVK. CCHC-type zinc fingers lie at residues 555 to 575 and 580 to 601; these read CEVCQYECETAKELESHRKSC and CPYCLNPSEATTSALQAHFKVC. Binding to the ribonucleoprotein stretches follow at residues 598–615, 602–613, and 621–635; these read FKVCKLTSRFQENLRKSL, KLTSRFQENLRK, and MQGCYRTLSLFRYRS. Positions 621 to 644 constitute an ITAM domain; it reads MQGCYRTLSLFRYRSRFFVGLVWC. The YxxL signature appears at 625-628; the sequence is YRTL. A helical transmembrane segment spans residues 638-658; that stretch reads FVGLVWCVLLVLELIVWAASA. Over 659–1115 the chain is Lumenal; it reads ETQNLNAGWT…WILGVLNGNW (457 aa). 8 disulfide bridges follow: C745/C780, C749/C787, C761/C894, C775/C905, C790/C913, C816/C825, C833/C842, and C873/C877. The tract at residues 767–787 is fusion loop; the sequence is YEYETGWGCNPPDCPGVGTGC. The N-linked (GlcNAc...) asparagine; by host glycan is linked to N937. 5 cysteine pairs are disulfide-bonded: C979–C1009, C1002–C1054, C1019–C1024, C1055–C1060, and C1094–C1098. The helical transmembrane segment at 1116-1136 threads the bilayer; the sequence is MVVAVLVVLLILSILLFTLCC. 2 binding to the ribonucleoprotein regions span residues 1131-1143 and 1131-1148; these read LFTLCCPRRPSYR and LFTLCCPRRPSYRKEHKP. The Cytoplasmic portion of the chain corresponds to 1137 to 1148; sequence PRRPSYRKEHKP.

This sequence belongs to the hantavirus envelope glycoprotein family. As to quaternary structure, homodimer. Homotetramer; forms heterotetrameric Gn-Gc spikes in the pre-fusion conformation. Interacts (via C-terminus) with the nucleoprotein. Interacts with host TUFM; this interaction contributes to the virus-induced degradation of mitochondria by autophagy, which leads to degradation of host MAVS and inhibition of type I interferon (IFN) responses. Interacts with host MAP1LC3B; this interaction contributes to the virus-induced degradation of mitochondria by autophagy, which leads to degradation of host MAVS and inhibition of type I interferon (IFN) responses. In terms of assembly, homodimer. Homotetramer; forms heterotetrameric Gn-Gc spikes in the pre-fusion conformation. Homotrimer; forms homotrimer in the post-fusion conformation at acidic pH. Interacts (via C-terminus) with the nucleoprotein. In terms of processing, envelope polyprotein precursor is quickly cleaved in vivo just after synthesis, presumably by host signal peptidase.

It is found in the virion membrane. It localises to the host cell surface. The protein localises to the host Golgi apparatus membrane. Its subcellular location is the host endoplasmic reticulum membrane. The protein resides in the host mitochondrion. Forms homotetramers with glycoprotein C at the surface of the virion. Attaches the virion to host cell receptors including integrin ITGAV/ITGB3. This attachment induces virion internalization predominantly through clathrin-dependent endocytosis. Mediates the assembly and budding of infectious virus particles through its interaction with the nucleocapsid protein and the viral genome. May dysregulate normal immune and endothelial cell responses through an ITAM motif. Translocates to mitochondria, binds to host TUFM and recruits MAP1LC3B. These interactions induce mitochondrial autophagy and therefore destruction of host MAVS leading to inhibition of type I interferon (IFN) responses. Concomitant breakdown of glycoprotein N is apparently prevented by the nucleoprotein that may inhibit Gn-stimulated autophagosome-lysosome fusion. Interacts with the viral genomic RNA. Its function is as follows. Forms homotetramers with glycoprotein N at the surface of the virion. Attaches the virion to host cell receptors including integrin ITGAV/ITGB3. This attachment induces virion internalization predominantly through clathrin-dependent endocytosis. Class II fusion protein that promotes fusion of viral membrane with host endosomal membrane after endocytosis of the virion. This Homo sapiens (Human) protein is Envelopment polyprotein (GP).